Here is a 322-residue protein sequence, read N- to C-terminus: Methionyl-tRNA formyltransferase (322 aa).

Residue 113 to 116 (SLLP) coordinates (6S)-5,6,7,8-tetrahydrofolate.

Belongs to the Fmt family.

The catalysed reaction is L-methionyl-tRNA(fMet) + (6R)-10-formyltetrahydrofolate = N-formyl-L-methionyl-tRNA(fMet) + (6S)-5,6,7,8-tetrahydrofolate + H(+). In terms of biological role, attaches a formyl group to the free amino group of methionyl-tRNA(fMet). The formyl group appears to play a dual role in the initiator identity of N-formylmethionyl-tRNA by promoting its recognition by IF2 and preventing the misappropriation of this tRNA by the elongation apparatus. In Blochmanniella pennsylvanica (strain BPEN), this protein is Methionyl-tRNA formyltransferase.